The chain runs to 272 residues: Putative phosphatase HI_0597 (272 aa).

Residue D11 is the Nucleophile of the active site. D11 is a Mg(2+) binding site. Position 12 (L12) interacts with phosphate. Residue D13 coordinates Mg(2+). Phosphate contacts are provided by residues 45–46 (TG) and K195. Mg(2+) is bound at residue D218. Residue N221 coordinates phosphate.

It belongs to the HAD-like hydrolase superfamily. Cof family. It depends on Mg(2+) as a cofactor.

This is Putative phosphatase HI_0597 from Haemophilus influenzae (strain ATCC 51907 / DSM 11121 / KW20 / Rd).